We begin with the raw amino-acid sequence, 1040 residues long: Multidrug resistance protein MdtB (1040 aa).

Helical transmembrane passes span 16–36, 347–367, 369–389, 396–416, 440–460, 472–492, 537–557, 863–883, 888–908, 911–931, 968–988, and 998–1018; these read FIMRPVATTLLMVAILLAGII, LMMAIALVVMIIYLFLRNIPA, IIPGVAVPLSLIGTFAVMVFL, LTLMALTIATGFVVDDAIVVI, IGFTIISLTFSLIAVLIPLLF, FAITLAVAILISAVVSLTLTP, WLTLSVALSTLLLSVLLWVFI, LGSTVWLIVAAVVAMYIVLGI, FIHPITILSTLPTAGVGALLA, IAGSELDVIAIIGIILLIGIV, ILMTTLAALLGALPLMLSTGV, and IGMVGGLIVSQVLTLFTTPVI.

The protein belongs to the resistance-nodulation-cell division (RND) (TC 2.A.6) family. MdtB subfamily. As to quaternary structure, part of a tripartite efflux system composed of MdtA, MdtB and MdtC. MdtB forms a heteromultimer with MdtC.

Its subcellular location is the cell inner membrane. The MdtABC tripartite complex confers resistance against novobiocin and deoxycholate. The polypeptide is Multidrug resistance protein MdtB (Escherichia coli O81 (strain ED1a)).